The sequence spans 112 residues: Ribonuclease VapC8 (112 aa).

Residues 10–109 (LLDTSVFIAR…TDALIAATAE (100 aa)) form the PINc domain. Positions 12 and 101 each coordinate Mg(2+).

The protein belongs to the PINc/VapC protein family. Mg(2+) serves as cofactor.

Its function is as follows. Toxic component of a type II toxin-antitoxin (TA) system. An RNase. The cognate antitoxin is VapB8. This chain is Ribonuclease VapC8 (vapC8), found in Mycobacterium tuberculosis (strain CDC 1551 / Oshkosh).